We begin with the raw amino-acid sequence, 125 residues long: Large ribosomal subunit protein mL51 (125 aa).

The N-terminal 29 residues, 1-29 (MWSVQQLLWGCRSLLTQGCRSFSLGSRDL), are a transit peptide targeting the mitochondrion.

It belongs to the mitochondrion-specific ribosomal protein mL51 family. As to quaternary structure, component of the mitochondrial ribosome large subunit (39S) which comprises a 16S rRNA and about 50 distinct proteins.

It localises to the mitochondrion. The polypeptide is Large ribosomal subunit protein mL51 (mrpl51) (Xenopus tropicalis (Western clawed frog)).